We begin with the raw amino-acid sequence, 140 residues long: MDLHMFVPDFQAMREELTRLGFEELRTAEEVQEKLPTAKGVTLLAINSMCGCAGGIARPAAALALRQVKPDHLMTVFAGQDKEATAAARALFPQYPPSSPSFAVLKDGQAVAMIPRSQIEGSDPQTVAQRIVEAVQAARG.

The protein belongs to the bacilliredoxin family.

The polypeptide is Bacilliredoxin STH2395 (Symbiobacterium thermophilum (strain DSM 24528 / JCM 14929 / IAM 14863 / T)).